A 529-amino-acid chain; its full sequence is UDP-glucuronosyltransferase 2B7 (529 aa).

The signal sequence occupies residues 1-23 (MSVKWTSVILLIQLSFCFSSGNC). Asn-67, Asn-68, and Asn-315 each carry an N-linked (GlcNAc...) asparagine glycan. UDP-alpha-D-glucuronate is bound by residues 373–379 (THGGANG) and Asp-398. The chain crosses the membrane as a helical span at residues 493–509 (VIGFLLVCVATVIFIVT).

The protein belongs to the UDP-glycosyltransferase family.

It is found in the endoplasmic reticulum membrane. The enzyme catalyses glucuronate acceptor + UDP-alpha-D-glucuronate = acceptor beta-D-glucuronoside + UDP + H(+). The catalysed reaction is 17alpha-estradiol + UDP-alpha-D-glucuronate = 17alpha-estradiol 17-O-(beta-D-glucuronate) + UDP + H(+). It carries out the reaction 17beta-estradiol + UDP-alpha-D-glucuronate = 17beta-estradiol 17-O-(beta-D-glucuronate) + UDP + H(+). It catalyses the reaction 2-hydroxy-17beta-estradiol + UDP-alpha-D-glucuronate = 2-hydroxy-17beta-estradiol 3-O-(beta-D-glucuronate) + UDP + H(+). The enzyme catalyses 4-hydroxy-17beta-estradiol + UDP-alpha-D-glucuronate = 17beta-estradiol 4-O-(beta-D-glucuronate) + UDP + H(+). The catalysed reaction is 4-hydroxyestrone + UDP-alpha-D-glucuronate = estrone 4-O-(beta-D-glucuronate) + UDP + H(+). It carries out the reaction 16alpha-hydroxyestrone + UDP-alpha-D-glucuronate = 16alpha-hydroxyestrone 16-O-(beta-D-glucuronate) + UDP + H(+). It catalyses the reaction 16alpha,17beta-estriol + UDP-alpha-D-glucuronate = 16alpha,17beta-estriol 16-O-(beta-D-glucuronate) + UDP + H(+). The enzyme catalyses 16beta,17beta-estriol + UDP-alpha-D-glucuronate = 16beta,17beta-estriol 16-O-(beta-D-glucuronate) + UDP + H(+). The catalysed reaction is 16alpha,17alpha-estriol + UDP-alpha-D-glucuronate = 16alpha,17alpha-estriol 16-O-(beta-D-glucuronate) + UDP + H(+). It carries out the reaction 16alpha,17alpha-estriol + UDP-alpha-D-glucuronate = 16alpha,17alpha-estriol 17-O-(beta-D-glucuronate) + UDP + H(+). It catalyses the reaction epitestosterone + UDP-alpha-D-glucuronate = epitestosterone 17-O-(beta-D-glucuronate) + UDP + H(+). The enzyme catalyses hyodeoxycholate + UDP-alpha-D-glucuronate = hyodeoxycholate 6-O-(beta-D-glucuronate) + UDP + H(+). The catalysed reaction is hyocholate + UDP-alpha-D-glucuronate = hyocholate 6-O-(beta-D-glucuronate) + UDP + H(+). It carries out the reaction all-trans-retinoate + UDP-alpha-D-glucuronate = all-trans-retinoyl-1-O-(beta-D-glucuronate) + UDP. It catalyses the reaction all-trans-4-hydroxyretinoate + UDP-alpha-D-glucuronate = all-trans-4-hydroxy-4-O-(beta-D-glucuronide)-retinoate + UDP + H(+). The enzyme catalyses (E)-ferulate + UDP-alpha-D-glucuronate = (E)-ferulic acid beta-D-glucuronate ester + UDP. The catalysed reaction is 8-iso-prostaglandin F2alpha + UDP-alpha-D-glucuronate = 8-iso-prostaglandin F2alpha-glucuronide + UDP + H(+). It carries out the reaction 5-epi-5-F2t-IsoP + UDP-alpha-D-glucuronate = 5-epi-5-F2t-IsoP-glucuronide + UDP + H(+). It catalyses the reaction (5Z,8Z,11Z,14Z)-eicosatetraenoate + UDP-alpha-D-glucuronate = O-[(5Z),(8Z),(11Z),(14Z)-eicosatetraenoyl]-beta-D-glucuronate + UDP. The enzyme catalyses 15-hydroxy-(5Z,8Z,11Z,13E)-eicosatetraenoate + UDP-alpha-D-glucuronate = 15-O-(beta-D-glucuronosyl)-(5Z,8Z,11Z,14Z)-eicosatetraenoate + UDP + H(+). The catalysed reaction is 20-hydroxy-(5Z,8Z,11Z,14Z)-eicosatetraenoate + UDP-alpha-D-glucuronate = 20-O-(beta-D-glucuronosyl)-(5Z,8Z,11Z,14Z)-eicosatetraenoate + UDP + H(+). It carries out the reaction (E)-ferulate + UDP-alpha-D-glucuronate = (E)-4-O-(beta-D-glucuronosyl)-ferulate + UDP + H(+). It catalyses the reaction prostaglandin B1 + UDP-alpha-D-glucuronate = 15-O-(beta-D-glucuronosyl)-prostaglandin B1 + UDP + H(+). The enzyme catalyses mycophenolate + UDP-alpha-D-glucuronate = mycophenolic acid O-acyl-beta-D-glucuronide + UDP. The catalysed reaction is losartan + UDP-alpha-D-glucuronate = losartan-2-N-beta-D-glucuronide + UDP. It carries out the reaction candesartan + UDP-alpha-D-glucuronate = candesartan O-beta-D-glucuronoside + UDP. It catalyses the reaction candesartan + UDP-alpha-D-glucuronate = candesartan-2-N-beta-D-glucuronide + UDP. The enzyme catalyses zolasartan + UDP-alpha-D-glucuronate = zolarsartan O-beta-D-glucuronoside + UDP. In terms of biological role, UDP-glucuronosyltransferase (UGT) that catalyzes phase II biotransformation reactions in which lipophilic substrates are conjugated with glucuronic acid to increase the metabolite's water solubility, thereby facilitating excretion into either the urine or bile. Essential for the elimination and detoxification of drugs, xenobiotics and endogenous compounds. Catalyzes the glucuronidation of endogenous steroid hormones such as androgens (epitestosterone, androsterone) and estrogens (estradiol, epiestradiol, estriol, catechol estrogens). Also regulates the levels of retinoic acid, a major metabolite of vitamin A involved in apoptosis, cellular growth and differentiation, and embryonic development. Contributes to bile acid (BA) detoxification by catalyzing the glucuronidation of BA substrates, which are natural detergents for dietary lipids absorption. Involved in the glucuronidation of arachidonic acid (AA) and AA-derived eicosanoids including 15-HETE, 20-HETE, PGE2, PGB1 and F2-isoprostanes (8-iso-PGF2alpha and 5-epi-5-F2t-IsoP). Involved in the glucuronidation of the phytochemical ferulic acid at the phenolic or the carboxylic acid group. Involved in the glucuronidation of the AGTR1 angiotensin receptor antagonist losartan, caderastan and zolarsatan, drugs which can inhibit the effect of angiotensin II. Also metabolizes mycophenolate, an immunosuppressive agent. The sequence is that of UDP-glucuronosyltransferase 2B7 from Homo sapiens (Human).